We begin with the raw amino-acid sequence, 95 residues long: Alpha-conotoxin GeXXA (95 aa).

The signal sequence occupies residues 1-21; that stretch reads MPKQEKMMLVLLILPLPYCNA. A propeptide spanning residues 22–45 is cleaved from the precursor; it reads AGVTTVQWGGHGDGLDRYLQRGVR. 4 disulfide bridges follow: Cys64/Cys73, Cys69/Cys81, Cys74/Cys91, and Cys79/Cys93.

This sequence belongs to the conotoxin D superfamily. Homodimer. Pseudo-homodimer (identical sequence, different post-translational modifications). As to expression, expressed by the venom duct.

The protein resides in the secreted. Functionally, alpha-D-conopeptides act as non-competitive inhibitors of nicotinic acetylcholine receptors (nAChR). Through its two C-terminal domains, this homodimeric protein would bind to two nAChR allosteric sites, located outside the nAChR C-loop of the principal binding face and at the adjacent binding interface in a clockwise direction. This toxin has strong inhibitory activity on rat alpha-9-alpha-10 (CHRNA9-CHRNA10) (IC(50)=1.2 nM) and a moderate inhibitory activity on human alpha-7 (CHRNA7) (IC(50)=210 nM), rat alpha-3-beta-2 (CHRNA3-CHRNB2) (IC(50)=498 nM), rat alpha-3-beta-4 (CHRNA3-CHRNB4) (IC(50)=614 nM) and rat alpha-1-beta-1-delta-epsilon (CHRNA1-CHRNB1-CHRNE-CHRND) (IC(50)=743 nM) subtypes. Shows a weaker inhibitory activity on human alpha-9-alpha-10 (IC(50)=28 nM) than on the rat channel. This is explained by a different residue in the probable binding site (His-31 in rat alpha-10 and Leu-31 in human). The chain is Alpha-conotoxin GeXXA from Conus generalis (General cone).